A 238-amino-acid polypeptide reads, in one-letter code: MRPAGRSNNQVRPVTLTRNYTKHAEGSVLVEFGDTKVLCTASIEEGVPRFLKGQGQGWITAEYGMLPRSTHTRNAREAAKGKQGGRTMEIQRLIARALRAAVDLKALGEFTITLDCDVLQADGGTRTASITGACMALADALQKLVENGKLKTNPMKGMVAAVSVGIVNGEAVCDLEYVEDSAAETDMNVVMTEDGRIIEVQGTAEGEPFTHEELLTLLALARGGIESIVATQKAALAN.

Phosphate contacts are provided by residues R86 and 124-126; that span reads GTR.

It belongs to the RNase PH family. Homohexameric ring arranged as a trimer of dimers.

The enzyme catalyses tRNA(n+1) + phosphate = tRNA(n) + a ribonucleoside 5'-diphosphate. Functionally, phosphorolytic 3'-5' exoribonuclease that plays an important role in tRNA 3'-end maturation. Removes nucleotide residues following the 3'-CCA terminus of tRNAs; can also add nucleotides to the ends of RNA molecules by using nucleoside diphosphates as substrates, but this may not be physiologically important. Probably plays a role in initiation of 16S rRNA degradation (leading to ribosome degradation) during starvation. The protein is Ribonuclease PH of Shigella dysenteriae serotype 1 (strain Sd197).